The following is a 661-amino-acid chain: Acetyl-coenzyme A synthetase (661 aa).

CoA contacts are provided by residues 197 to 200 (RGGK) and T320. Residues 396–398 (GEP), 420–425 (DTWWQT), D511, and R526 contribute to the ATP site. CoA is bound at residue S534. R537 contacts ATP. 2 residues coordinate Mg(2+): V548 and V553. Residue K620 is modified to N6-acetyllysine.

It belongs to the ATP-dependent AMP-binding enzyme family. Mg(2+) serves as cofactor. Acetylated. Deacetylation by the SIR2-homolog deacetylase activates the enzyme.

The catalysed reaction is acetate + ATP + CoA = acetyl-CoA + AMP + diphosphate. Functionally, catalyzes the conversion of acetate into acetyl-CoA (AcCoA), an essential intermediate at the junction of anabolic and catabolic pathways. AcsA undergoes a two-step reaction. In the first half reaction, AcsA combines acetate with ATP to form acetyl-adenylate (AcAMP) intermediate. In the second half reaction, it can then transfer the acetyl group from AcAMP to the sulfhydryl group of CoA, forming the product AcCoA. This is Acetyl-coenzyme A synthetase from Leptospira interrogans serogroup Icterohaemorrhagiae serovar copenhageni (strain Fiocruz L1-130).